Here is a 117-residue protein sequence, read N- to C-terminus: DNA polymerase epsilon subunit 4 (117 aa).

Residues 1–36 (MAAAAAAGSGTPREEEGPAGEAAASQPQAPTSVPGA) are disordered. Ala2 bears the N-acetylalanine mark. A Phosphothreonine modification is found at Thr11. Low complexity predominate over residues 19 to 30 (AGEAAASQPQAP). Residue Ser25 is modified to Phosphoserine.

In terms of assembly, component of the DNA polymerase epsilon complex consisting of four subunits: the catalytic subunit POLE and the accessory subunits POLE2, POLE3 and POLE4. Interaction with POLE3 is a prerequisite for further binding with POLE and POLE2.

The protein localises to the nucleus. In terms of biological role, accessory component of the DNA polymerase epsilon complex. Participates in DNA repair and in chromosomal DNA replication. The chain is DNA polymerase epsilon subunit 4 (POLE4) from Homo sapiens (Human).